The primary structure comprises 142 residues: MGKTRGMGAARKLKNHRRRQRWADKSYKKSHLGNEWKKPFAGSSHAKGIVLEKIGIEAKQPNSAIRKCARVQLIKNGKKIAAFVPNDGCLNYIEENDEVLIAGFGRKGHAVGDIPGVRFKVVKVSGVSLLALFKEKKEKPRS.

The interval 1-30 (MGKTRGMGAARKLKNHRRRQRWADKSYKKS) is disordered. Residues 11 to 20 (RKLKNHRRRQ) are compositionally biased toward basic residues. Basic and acidic residues predominate over residues 21–30 (RWADKSYKKS). Residue Pro-61 is modified to Hydroxyproline.

Belongs to the universal ribosomal protein uS12 family.

In Fragaria ananassa (Strawberry), this protein is Small ribosomal subunit protein uS12 (RPS23).